Reading from the N-terminus, the 573-residue chain is MTPATARDATERDATDTDVVIVGAGPVGLTLANILGLQGVRTMIVEERATLIDYPRGVGLDDEALRTFQAIGLVDKVLPHTVPNQILRFFDGNRRLLAEMAPPDARFGWPKRNGFVQPMVDAELHAGLARFPHVEVRWGHRMAECEETADGVTVRLDGDPTPVRARYLVGCDGGRSATRRLMGVSFDGTTSPTRWLVVDIANDPLGHPNSEVGADPARPYASISIAHGIRRFEFMIHADETDEQAEDPAFIHRMLGLLVPHPERVEVIRHRVYTHHSRIAGAFRKGRMFLAGDAAHLMPVWQGQGYNSGIRDAANLGWKLAAVVDGRAGDALLDTYDVERRKHARAMIDLSTMVGRVISPTNRRVAAVRDKLIRGASVVPTLKRYVLEMRFKPMPRYEQGAVFHPEAPSPTSPAGTLFIQPRVDTRDAQNVLLDEVLGTGFAVLCWNNNPRALLGADLFDRWKALGARFVAARPLTQLHWTGHDDPDVTVIGDRTGALKGWFDAHAESVLFLRPDRCIAGACIAQRAPEVSTALFGVLHLTQGGGNGHHGADRPVLHVAQSATEPSGTVAGTP.

Residues 18 to 47 and 283 to 293 each bind FAD; these read DVVI…IVEE and FRKGRMFLAGD.

It belongs to the PheA/TfdB FAD monooxygenase family. FAD serves as cofactor.

The enzyme catalyses 3-(3-hydroxyphenyl)propanoate + NADH + O2 + H(+) = 3-(2,3-dihydroxyphenyl)propanoate + NAD(+) + H2O. It carries out the reaction (2E)-3-(3-hydroxyphenyl)prop-2-enoate + NADH + O2 + H(+) = (2E)-3-(2,3-dihydroxyphenyl)prop-2-enoate + NAD(+) + H2O. The protein operates within aromatic compound metabolism; 3-phenylpropanoate degradation. In terms of biological role, catalyzes the insertion of one atom of molecular oxygen into position 2 of the phenyl ring of 3-(3-hydroxyphenyl)propionate (3-HPP) and hydroxycinnamic acid (3HCI). This Mycobacterium sp. (strain KMS) protein is 3-(3-hydroxy-phenyl)propionate/3-hydroxycinnamic acid hydroxylase.